A 492-amino-acid chain; its full sequence is Catalase isozyme 2 (492 aa).

Catalysis depends on residues H65 and N138. Y347 contributes to the heme binding site.

Belongs to the catalase family. Homotetramer. Heme serves as cofactor. In terms of tissue distribution, high levels in green cotyledons, mature leaf, stem and green hypocotyl.

Its subcellular location is the peroxisome. It carries out the reaction 2 H2O2 = O2 + 2 H2O. In terms of biological role, occurs in almost all aerobically respiring organisms and serves to protect cells from the toxic effects of hydrogen peroxide. In Cucurbita pepo (Vegetable marrow), this protein is Catalase isozyme 2 (CAT2).